A 432-amino-acid chain; its full sequence is 5'-deoxyadenosine deaminase (432 aa).

Residues H63 and H65 each coordinate Zn(2+). Residues E92 and H184 each coordinate substrate. H211 contributes to the Zn(2+) binding site. Substrate-binding residues include E214 and D299. Residue D299 participates in Zn(2+) binding.

It belongs to the metallo-dependent hydrolases superfamily. MTA/SAH deaminase family. Homotetramer. Zn(2+) is required as a cofactor.

The catalysed reaction is 5'-deoxyadenosine + H2O + H(+) = 5'-deoxyinosine + NH4(+). It carries out the reaction S-adenosyl-L-homocysteine + H2O + H(+) = S-inosyl-L-homocysteine + NH4(+). The enzyme catalyses S-methyl-5'-thioadenosine + H2O + H(+) = S-methyl-5'-thioinosine + NH4(+). It catalyses the reaction adenosine + H2O + H(+) = inosine + NH4(+). It functions in the pathway amino-acid biosynthesis; S-adenosyl-L-methionine biosynthesis. Catalyzes the deamination of three SAM-derived enzymatic products, namely 5'-deoxyadenosine, S-adenosyl-L-homocysteine, and 5'-methylthioadenosine, to produce the inosine analogs. Can also deaminate adenosine. The preferred substrate for this enzyme is 5'-deoxyadenosine, but all these substrates are efficiently deaminated. Likely functions in a S-adenosyl-L-methionine (SAM) recycling pathway from S-adenosyl-L-homocysteine (SAH) produced from SAM-dependent methylation reactions. May also be involved in the recycling of 5'-deoxyadenosine, whereupon the 5'-deoxyribose moiety of 5'-deoxyinosine is further metabolized to deoxyhexoses used for the biosynthesis of aromatic amino acids in methanogens. This is 5'-deoxyadenosine deaminase from Methanosarcina barkeri (strain Fusaro / DSM 804).